The sequence spans 483 residues: Probable gamma-aminobutyrate transaminase 4 (483 aa).

Residue 138–139 (GS) participates in pyridoxal 5'-phosphate binding. A substrate-binding site is contributed by Y171. D278 lines the pyridoxal 5'-phosphate pocket. Residue K307 coordinates substrate. At K307 the chain carries N6-(pyridoxal phosphate)lysine.

The protein belongs to the class-III pyridoxal-phosphate-dependent aminotransferase family. As to expression, not detected in roots, stems, flowers or leaves of healthy plants.

The protein localises to the cytoplasm. It catalyses the reaction 4-aminobutanoate + pyruvate = succinate semialdehyde + L-alanine. The catalysed reaction is 4-aminobutanoate + glyoxylate = succinate semialdehyde + glycine. Transaminase that degrades gamma-amino butyric acid (GABA). The protein is Probable gamma-aminobutyrate transaminase 4 (GABA-T) of Oryza sativa subsp. japonica (Rice).